We begin with the raw amino-acid sequence, 195 residues long: Pyridoxal 5'-phosphate synthase subunit PdxT (195 aa).

46–48 (GES) is an L-glutamine binding site. Catalysis depends on cysteine 78, which acts as the Nucleophile. L-glutamine contacts are provided by residues arginine 107 and 135–136 (IR). Active-site charge relay system residues include histidine 172 and glutamate 174.

This sequence belongs to the glutaminase PdxT/SNO family. In terms of assembly, in the presence of PdxS, forms a dodecamer of heterodimers. Only shows activity in the heterodimer.

The catalysed reaction is aldehydo-D-ribose 5-phosphate + D-glyceraldehyde 3-phosphate + L-glutamine = pyridoxal 5'-phosphate + L-glutamate + phosphate + 3 H2O + H(+). It carries out the reaction L-glutamine + H2O = L-glutamate + NH4(+). It functions in the pathway cofactor biosynthesis; pyridoxal 5'-phosphate biosynthesis. Its function is as follows. Catalyzes the hydrolysis of glutamine to glutamate and ammonia as part of the biosynthesis of pyridoxal 5'-phosphate. The resulting ammonia molecule is channeled to the active site of PdxS. The protein is Pyridoxal 5'-phosphate synthase subunit PdxT of Corynebacterium jeikeium (strain K411).